We begin with the raw amino-acid sequence, 232 residues long: Zinc-finger homeodomain protein 5 (232 aa).

Positions 1–11 (MELSEHEEDAG) are enriched in acidic residues. The disordered stretch occupies residues 1 to 25 (MELSEHEEDAGDVGGGCSSPPTPPH). The ZF-HD dimerization-type; degenerate zinc finger occupies 40-86 (YHECLRNHAAASGGHVVDGCGEFMPASTEEPLACAACGCHRSFHRRD). Residues 126 to 170 (GLPFPGYGTPSGGTGTTTASSSDERLRPSPVQPRRRSRTTFTREQ) are disordered. A DNA-binding region (homeobox) is located at residues 159–222 (RRRSRTTFTR…NNKHSFKQKQ (64 aa)).

Homo- and heterodimer with other ZFHD proteins.

It localises to the nucleus. In terms of biological role, putative transcription factor. This chain is Zinc-finger homeodomain protein 5 (ZHD5), found in Oryza sativa subsp. japonica (Rice).